Consider the following 320-residue polypeptide: MYRSTLLFLFIALVNAFANPGPCTGDCWTHDPGLYQRKSDGRYFRFATGGGIHISSAPAIVGPWEDNGFALPNGSKINHAGNDNLWAPDVHYQENTKKYYMYYSVSVLGKKDSVIGVASSDTMEVGSWTDHGSIGLNTSNNPPYNTIDANWIRIDGAPALNFGSYWQGIFQVPLKNPFELAEIAPHQIAWNASLNHRIEAAFEFKHGNYYYLTFSSGLGGNYDVNLPAQGEEYSIHVCRSEGGRNNFVDKSGRSCRESGGTTLLASHGNVYAPGGQGIVEDKNLGQVLYYHYADKTKGLAKTDYQFGWNRLNWVDGWPSV.

The first 16 residues, 1–16, serve as a signal peptide directing secretion; sequence MYRSTLLFLFIALVNA. Asp-31 functions as the Proton acceptor in the catalytic mechanism. N-linked (GlcNAc...) asparagine glycosylation is found at Asn-73, Asn-137, and Asn-191. Residue Glu-199 is the Proton donor of the active site.

Belongs to the glycosyl hydrolase 43 family.

It localises to the secreted. It catalyses the reaction Endohydrolysis of (1-&gt;5)-alpha-arabinofuranosidic linkages in (1-&gt;5)-arabinans.. Its pathway is glycan metabolism; L-arabinan degradation. Its function is as follows. Endo-1,5-alpha-L-arabinanase involved in degradation of pectin. Its preferred substrate is linear 1,5-alpha-L-arabinan. This is Probable arabinan endo-1,5-alpha-L-arabinosidase C (abnC) from Aspergillus terreus (strain NIH 2624 / FGSC A1156).